We begin with the raw amino-acid sequence, 401 residues long: MAEGSGIDRKADERMEFSTSKEVTVHPTFESMSLKENLLRGIYAYGYESPSAVQSRAIVQVCKGRDTIAQAQSGTGKTATFSISMLQVIDTAVRETQALVLSPTRELATQIQSVVMALGDYMNVQCHACIGGTNVGEDIRKLDYGQHIVSGTPGRVADMIRRRHLRTRHIKMLVLDEADELLNKGFREQIYDVYRYLPPATQVVVVSATLPYDVLDMTTKFMTDPVRILVKRDELTLEGLKQYFIAVEKEDWKFDTLCDLYDTLTITQAVIFCNTRRKVDWLTDKMREANFTVSSMHGDMPQKERDSIMQDFRQGNSRVLISTDVWARGIDVQQVSLVINYDLPSNRENYIHRIGRSGRFGRKGVAINFVTTEDVRILRDIELYYSTQIDEMPMNVADLIA.

The Q motif motif lies at 27 to 55 (PTFESMSLKENLLRGIYAYGYESPSAVQS). The Helicase ATP-binding domain occupies 58-228 (IVQVCKGRDT…TKFMTDPVRI (171 aa)). 71–78 (AQSGTGKT) contacts ATP. The DEAD box motif lies at 176–179 (DEAD). A Helicase C-terminal domain is found at 239–400 (GLKQYFIAVE…EMPMNVADLI (162 aa)).

Belongs to the DEAD box helicase family. DDX48/FAL1 subfamily.

The protein localises to the nucleus. Its subcellular location is the nucleolus. The catalysed reaction is ATP + H2O = ADP + phosphate + H(+). ATP-dependent RNA helicase involved in 40S ribosomal subunit biogenesis. Required for the processing and cleavage of 35S pre-rRNA at sites A0, A1, and A2, leading to mature 18S rRNA. The protein is ATP-dependent RNA helicase FAL1 (FAL1) of Gibberella zeae (strain ATCC MYA-4620 / CBS 123657 / FGSC 9075 / NRRL 31084 / PH-1) (Wheat head blight fungus).